Consider the following 460-residue polypeptide: tRNA modification GTPase MnmE (460 aa).

(6S)-5-formyl-5,6,7,8-tetrahydrofolate contacts are provided by Arg-29, Glu-91, and Lys-132. The 157-residue stretch at 227–383 folds into the TrmE-type G domain; it reads GISIALIGKT…LIDTIIKKCG (157 aa). Asn-237 contributes to the K(+) binding site. Residues 237-242, 256-262, and 281-284 contribute to the GTP site; these read NVGKSS, TNIPGTT, and DTAG. Residue Ser-241 coordinates Mg(2+). Residues Thr-256, Ile-258, and Thr-261 each coordinate K(+). Thr-262 is a binding site for Mg(2+). Lys-460 is a binding site for (6S)-5-formyl-5,6,7,8-tetrahydrofolate.

It belongs to the TRAFAC class TrmE-Era-EngA-EngB-Septin-like GTPase superfamily. TrmE GTPase family. In terms of assembly, homodimer. Heterotetramer of two MnmE and two MnmG subunits. K(+) is required as a cofactor.

It localises to the cytoplasm. Functionally, exhibits a very high intrinsic GTPase hydrolysis rate. Involved in the addition of a carboxymethylaminomethyl (cmnm) group at the wobble position (U34) of certain tRNAs, forming tRNA-cmnm(5)s(2)U34. The protein is tRNA modification GTPase MnmE of Prochlorococcus marinus (strain MIT 9301).